The chain runs to 509 residues: Citrate synthase 3, peroxisomal (509 aa).

Active-site residues include His-319, His-358, and Asp-414. Positions Ser-485–Val-509 are disordered. A compositionally biased stretch (basic residues) spans Ser-500–Val-509.

This sequence belongs to the citrate synthase family. As to expression, widely expressed. Expressed throughout the shoot. Expressed in flower, silique, stem, cauline leaf, young leaf, mature leaf and senescent leaf.

Its subcellular location is the peroxisome. It carries out the reaction oxaloacetate + acetyl-CoA + H2O = citrate + CoA + H(+). Its pathway is carbohydrate metabolism; tricarboxylic acid cycle; isocitrate from oxaloacetate: step 1/2. Peroxisomal citrate synthase required for the fatty acid respiration in seedlings, citrate being exported from peroxisomes into mitochondria during respiration of triacylglycerol (TAG). Indeed, complete respiration requires the transfer of carbon in the form of citrate from the peroxisome to the mitochondria. The chain is Citrate synthase 3, peroxisomal (CSY3) from Arabidopsis thaliana (Mouse-ear cress).